The chain runs to 147 residues: Large ribosomal subunit protein uL15 (147 aa).

Residues 1 to 13 (MELHSLKAAEGSR) show a composition bias toward basic and acidic residues. The tract at residues 1–57 (MELHSLKAAEGSRKVRNRVGRGTSSGNGKTSGRGQKGQKSRSGGGVRPGFEGGQTEL) is disordered. Composition is skewed to gly residues over residues 23–35 (TSSG…GRGQ) and 42–52 (SGGGVRPGFEG).

It belongs to the universal ribosomal protein uL15 family. In terms of assembly, part of the 50S ribosomal subunit.

Binds to the 23S rRNA. In Lactococcus lactis subsp. cremoris (strain MG1363), this protein is Large ribosomal subunit protein uL15.